The chain runs to 63 residues: Period circadian protein (63 aa).

A disordered region spans residues 1 to 63; sequence EGSGGSGSSG…VTLTESLLNK (63 aa). 2 stretches are compositionally biased toward low complexity: residues 9–31 and 39–49; these read SGNF…NAGT and SAAASGASVNA. Positions 54-63 are enriched in polar residues; that stretch reads VTLTESLLNK.

As to quaternary structure, forms a heterodimer with timeless (TIM); the complex then translocates into the nucleus. Post-translationally, phosphorylated with a circadian rhythmicity, probably by the double-time protein (dbt). Phosphorylation could be implicated in the stability of per monomer and in the formation of heterodimer per-tim.

The protein localises to the nucleus. The protein resides in the cytoplasm. It localises to the perinuclear region. Functionally, essential for biological clock functions. Determines the period length of circadian and ultradian rhythms; an increase in PER dosage leads to shortened circadian rhythms and a decrease leads to lengthened circadian rhythms. Essential for the circadian rhythmicity of locomotor activity, eclosion behavior, and for the rhythmic component of the male courtship song that originates in the thoracic nervous system. The biological cycle depends on the rhythmic formation and nuclear localization of the TIM-PER complex. Light induces the degradation of TIM, which promotes elimination of PER. Nuclear activity of the heterodimer coordinatively regulates PER and TIM transcription through a negative feedback loop. Behaves as a negative element in circadian transcriptional loop. Does not appear to bind DNA, suggesting indirect transcriptional inhibition. The protein is Period circadian protein (per) of Drosophila immigrans (Fruit fly).